The chain runs to 418 residues: 4-hydroxy-3-methylbut-2-en-1-yl diphosphate synthase (flavodoxin) (418 aa).

The [4Fe-4S] cluster site is built by C305, C308, C351, and E358.

This sequence belongs to the IspG family. It depends on [4Fe-4S] cluster as a cofactor.

The catalysed reaction is (2E)-4-hydroxy-3-methylbut-2-enyl diphosphate + oxidized [flavodoxin] + H2O + 2 H(+) = 2-C-methyl-D-erythritol 2,4-cyclic diphosphate + reduced [flavodoxin]. It participates in isoprenoid biosynthesis; isopentenyl diphosphate biosynthesis via DXP pathway; isopentenyl diphosphate from 1-deoxy-D-xylulose 5-phosphate: step 5/6. In terms of biological role, converts 2C-methyl-D-erythritol 2,4-cyclodiphosphate (ME-2,4cPP) into 1-hydroxy-2-methyl-2-(E)-butenyl 4-diphosphate. The protein is 4-hydroxy-3-methylbut-2-en-1-yl diphosphate synthase (flavodoxin) of Bartonella bacilliformis (strain ATCC 35685 / KC583 / Herrer 020/F12,63).